A 103-amino-acid polypeptide reads, in one-letter code: Co-chaperonin GroES (103 aa).

It belongs to the GroES chaperonin family. As to quaternary structure, heptamer of 7 subunits arranged in a ring. Interacts with the chaperonin GroEL.

The protein localises to the cytoplasm. Functionally, together with the chaperonin GroEL, plays an essential role in assisting protein folding. The GroEL-GroES system forms a nano-cage that allows encapsulation of the non-native substrate proteins and provides a physical environment optimized to promote and accelerate protein folding. GroES binds to the apical surface of the GroEL ring, thereby capping the opening of the GroEL channel. This Nostoc punctiforme (strain ATCC 29133 / PCC 73102) protein is Co-chaperonin GroES.